The chain runs to 234 residues: Thiamine import ATP-binding protein ThiQ (234 aa).

The ABC transporter domain occupies 2-230; the sequence is LVLDDVQYTY…HPSKTLQAFV (229 aa). ATP is bound at residue 32–39; it reads GPSGAGKS.

This sequence belongs to the ABC transporter superfamily. Thiamine importer (TC 3.A.1.19.1) family. The complex is composed of two ATP-binding proteins (ThiQ), two transmembrane proteins (ThiP) and a solute-binding protein (ThiB).

It is found in the cell inner membrane. It catalyses the reaction thiamine(out) + ATP + H2O = thiamine(in) + ADP + phosphate + H(+). Functionally, part of the ABC transporter complex ThiBPQ involved in thiamine import. Responsible for energy coupling to the transport system. The sequence is that of Thiamine import ATP-binding protein ThiQ from Vibrio parahaemolyticus serotype O3:K6 (strain RIMD 2210633).